Consider the following 93-residue polypeptide: Cobalt transport protein CbiN (93 aa).

A run of 2 helical transmembrane segments spans residues leucine 5–glycine 25 and leucine 63–cysteine 83.

This sequence belongs to the CbiN family. As to quaternary structure, forms an energy-coupling factor (ECF) transporter complex composed of an ATP-binding protein (A component, CbiO), a transmembrane protein (T component, CbiQ) and 2 possible substrate-capture proteins (S components, CbiM and CbiN) of unknown stoichimetry.

It is found in the cell inner membrane. The protein operates within cofactor biosynthesis; adenosylcobalamin biosynthesis. Its function is as follows. Part of the energy-coupling factor (ECF) transporter complex CbiMNOQ involved in cobalt import. The chain is Cobalt transport protein CbiN from Salmonella newport (strain SL254).